Here is a 93-residue protein sequence, read N- to C-terminus: Em protein H2 (93 aa).

Residues 1 to 93 (MASGQQERSQ…IDESKFKTKS (93 aa)) are disordered. Basic and acidic residues-rich tracts occupy residues 9 to 19 (SQLDRKAREGE), 31 to 52 (LEAHENLAEGRSRGGQTRREQM), and 73 to 93 (GGERAAREGIDIDESKFKTKS).

It belongs to the small hydrophilic plant seed protein family.

In terms of biological role, it is thought to provide protection for the cytoplasm during the desiccation stage of embryo development. The polypeptide is Em protein H2 (EMH2) (Triticum aestivum (Wheat)).